Consider the following 212-residue polypeptide: Adenine phosphoribosyltransferase (212 aa).

Belongs to the purine/pyrimidine phosphoribosyltransferase family. Homodimer.

It localises to the cytoplasm. It carries out the reaction AMP + diphosphate = 5-phospho-alpha-D-ribose 1-diphosphate + adenine. It participates in purine metabolism; AMP biosynthesis via salvage pathway; AMP from adenine: step 1/1. Its function is as follows. Catalyzes a salvage reaction resulting in the formation of AMP, that is energically less costly than de novo synthesis. This Mycobacterium tuberculosis (strain CDC 1551 / Oshkosh) protein is Adenine phosphoribosyltransferase.